The primary structure comprises 415 residues: Light-independent protochlorophyllide reductase subunit N (415 aa).

Residues Cys-16, Cys-41, and Cys-98 each contribute to the [4Fe-4S] cluster site.

The protein belongs to the BchN/ChlN family. As to quaternary structure, protochlorophyllide reductase is composed of three subunits; BchL, BchN and BchB. Forms a heterotetramer of two BchB and two BchN subunits. Requires [4Fe-4S] cluster as cofactor.

The enzyme catalyses chlorophyllide a + oxidized 2[4Fe-4S]-[ferredoxin] + 2 ADP + 2 phosphate = protochlorophyllide a + reduced 2[4Fe-4S]-[ferredoxin] + 2 ATP + 2 H2O. The protein operates within porphyrin-containing compound metabolism; bacteriochlorophyll biosynthesis (light-independent). In terms of biological role, component of the dark-operative protochlorophyllide reductase (DPOR) that uses Mg-ATP and reduced ferredoxin to reduce ring D of protochlorophyllide (Pchlide) to form chlorophyllide a (Chlide). This reaction is light-independent. The NB-protein (BchN-BchB) is the catalytic component of the complex. This chain is Light-independent protochlorophyllide reductase subunit N, found in Roseiflexus sp. (strain RS-1).